Here is a 515-residue protein sequence, read N- to C-terminus: UDP-glucosyltransferase 2 (515 aa).

An N-terminal signal peptide occupies residues 1 to 20 (MEFRLLILALFSVLMSTSNG). Residues 21–471 (AEILALFPIH…TAGAFLHWYQ (451 aa)) are Lumenal-facing. 3 N-linked (GlcNAc...) asparagine glycosylation sites follow: Asn-51, Asn-236, and Asn-303. Residues 472 to 492 (YLLLDVITFLLVTFCAFCFIV) traverse the membrane as a helical segment. Residues 493–515 (KYICKALIHHYWSSSKSEKLKKN) are Cytoplasmic-facing.

It belongs to the UDP-glycosyltransferase family. In terms of processing, glycosylated.

Its subcellular location is the endoplasmic reticulum membrane. It catalyses the reaction kermesate + UDP-alpha-D-glucose = carminate + UDP + 2 H(+). It carries out the reaction flavokermesate + UDP-alpha-D-glucose = flavokermesate 7-C-beta-D-glucoside + UDP + 2 H(+). Functionally, membrane-bound UDP-glucosyltransferase (UGT) which catalyzes the C-glucosylation of kermesate and flavokermesate to produce carminate and flavokermesate 7-C-beta-D-glucoside (dcll) respectively. Carminate is used as a deterrent against insect predators. In Dactylopius coccus (Cochineal), this protein is UDP-glucosyltransferase 2.